The primary structure comprises 141 residues: Hemoglobin subunit alpha-A (141 aa).

Residues 1–141 form the Globin domain; sequence MLSASDKANV…VGLVLTAKYR (141 aa). H58 contributes to the O2 binding site. H87 is a heme b binding site.

This sequence belongs to the globin family. In terms of assembly, there are three forms of hemoglobin in Sphenodon: A, A' and D. Hb A is a tetramer of two alpha-A and two beta-1, Hb A' is a tetramer of two alpha-a and two beta-2, Hb D is a tetramer of two alpha-D and two beta-2. Red blood cells.

Its function is as follows. Involved in oxygen transport from the lung to the various peripheral tissues. This chain is Hemoglobin subunit alpha-A (HBAA), found in Sphenodon punctatus (Tuatara).